A 568-amino-acid chain; its full sequence is DEAD-box ATP-dependent RNA helicase 51 (568 aa).

Basic and acidic residues-rich tracts occupy residues 1-13 (MVESDKSSVEELK) and 23-47 (KKNEQQKAEEKTHTVEENADETQKK). A disordered region spans residues 1–70 (MVESDKSSVE…EEEEKVEAME (70 aa)). Residues 13-78 (KKRVRKRSRG…MEDGEDEKNI (66 aa)) adopt a coiled-coil conformation. The segment covering 60–70 (EEEEEKVEAME) has biased composition (acidic residues). A Q motif motif is present at residues 89–117 (VTFDSLDLSEQTSIAIKEMGFQYMTQIQA). Residues 120–295 (IQPLLEGKDV…RVSLTSPVHV (176 aa)) form the Helicase ATP-binding domain. 133-140 (ARTGSGKT) lines the ATP pocket. Positions 243-246 (DEAD) match the DEAD box motif. The 148-residue stretch at 321 to 468 (RLILLISFLK…ELEFNEKRLS (148 aa)) folds into the Helicase C-terminal domain. The segment at 540–568 (KVRKARKQQGRNGFSPYSPYGKSTPTKEA) is disordered.

It belongs to the DEAD box helicase family. DDX18/HAS1 subfamily.

It catalyses the reaction ATP + H2O = ADP + phosphate + H(+). In Arabidopsis thaliana (Mouse-ear cress), this protein is DEAD-box ATP-dependent RNA helicase 51 (RH51).